Reading from the N-terminus, the 317-residue chain is Melanocyte-stimulating hormone receptor (317 aa).

Residues 1–37 (MPMQGAQRRLLGSLNSTPTATPNLGLAANHTGAPCLE) lie on the Extracellular side of the membrane. N-linked (GlcNAc...) asparagine glycosylation is present at N29. The helical transmembrane segment at 38 to 63 (VSIPDGLFLSLGLVSLVENVLVVAAI) threads the bilayer. Over 64–72 (AKNRNLHSP) the chain is Cytoplasmic. Residues 73-93 (MYCFICCLALSDLLVSGSNML) form a helical membrane-spanning segment. The Extracellular segment spans residues 94–118 (ETAVILLLEAGALATRASVVQQLQN). Residues 119 to 140 (TIDVLTCSSMLCSLCFLGAIAV) traverse the membrane as a helical segment. At 141–163 (DRYVSIFYALRYHSIVTLPRARR) the chain is on the cytoplasmic side. A helical membrane pass occupies residues 164–183 (AIAAIWVASVLSSTLFIAYC). At 184–191 (DHAAVLLC) the chain is on the extracellular side. A helical membrane pass occupies residues 192–211 (LVVFFLAMLVLMAVLYVHML). At 212-240 (ARACQHAQGITRLHKRQLPAHQGFGLRGA) the chain is on the cytoplasmic side. A helical transmembrane segment spans residues 241-266 (ATLTILLGIFFLCWGPFFLHLMLVVL). Topologically, residues 267 to 279 (CPQHLTCSCIFKN) are extracellular. Residues 280-300 (FKVFLTLIICNTIIDPLIYAF) form a helical membrane-spanning segment. Topologically, residues 301-317 (RSQELCRTLKEVLLCSW) are cytoplasmic. C315 carries S-palmitoyl cysteine lipidation.

The protein belongs to the G-protein coupled receptor 1 family. As to quaternary structure, interacts with MGRN1, but does not undergo MGRN1-mediated ubiquitination; this interaction competes with GNAS-binding and thus inhibits agonist-induced cAMP production. Interacts with OPN3; the interaction results in a decrease in MC1R-mediated cAMP signaling and ultimately a decrease in melanin production in melanocytes.

The protein localises to the cell membrane. Functionally, receptor for MSH (alpha, beta and gamma) and ACTH. The activity of this receptor is mediated by G proteins which activate adenylate cyclase. Mediates melanogenesis, the production of eumelanin (black/brown) and phaeomelanin (red/yellow), via regulation of cAMP signaling in melanocytes. The polypeptide is Melanocyte-stimulating hormone receptor (MC1R) (Alouatta palliata (Mantled howler monkey)).